The sequence spans 411 residues: Lissencephaly-1 homolog (411 aa).

Residues 9–41 form the LisH domain; the sequence is QREELNQAIADYLGTNGYADSLEAFRKEADLST. The stretch at 56-83 forms a coiled coil; it reads TSVIRLQKKVMELEAKLTEAEKEVIEGA. WD repeat units lie at residues 106–147, 148–187, 191–230, 233–272, 275–334, 337–376, and 379–411; these read GHRA…RTLK, GHTD…ECVK, GHDH…CVKT, GHRE…CKVE, DHEH…CLLT, GHDN…CMKT, and AHQH…WECR.

Belongs to the WD repeat LIS1/nudF family.

The protein resides in the cytoplasm. It is found in the cytoskeleton. The protein localises to the microtubule organizing center. Its subcellular location is the centrosome. Positively regulates the activity of the minus-end directed microtubule motor protein dynein. May enhance dynein-mediated microtubule sliding by targeting dynein to the microtubule plus end. Required for several dynein- and microtubule-dependent processes. This is Lissencephaly-1 homolog from Drosophila grimshawi (Hawaiian fruit fly).